The chain runs to 223 residues: Flagellar L-ring protein 2 (223 aa).

A signal peptide spans 1–17 (MKWLSKSWAVAVVLLVG). A lipid anchor (N-palmitoyl cysteine) is attached at Cys18. Residue Cys18 is the site of S-diacylglycerol cysteine attachment.

The protein belongs to the FlgH family. As to quaternary structure, the basal body constitutes a major portion of the flagellar organelle and consists of four rings (L,P,S, and M) mounted on a central rod.

The protein localises to the cell outer membrane. The protein resides in the bacterial flagellum basal body. In terms of biological role, assembles around the rod to form the L-ring and probably protects the motor/basal body from shearing forces during rotation. This Vibrio parahaemolyticus serotype O3:K6 (strain RIMD 2210633) protein is Flagellar L-ring protein 2.